We begin with the raw amino-acid sequence, 342 residues long: UDP-3-O-acylglucosamine N-acyltransferase (342 aa).

Histidine 253 acts as the Proton acceptor in catalysis.

It belongs to the transferase hexapeptide repeat family. LpxD subfamily. Homotrimer.

The catalysed reaction is a UDP-3-O-[(3R)-3-hydroxyacyl]-alpha-D-glucosamine + a (3R)-hydroxyacyl-[ACP] = a UDP-2-N,3-O-bis[(3R)-3-hydroxyacyl]-alpha-D-glucosamine + holo-[ACP] + H(+). Its pathway is bacterial outer membrane biogenesis; LPS lipid A biosynthesis. Functionally, catalyzes the N-acylation of UDP-3-O-acylglucosamine using 3-hydroxyacyl-ACP as the acyl donor. Is involved in the biosynthesis of lipid A, a phosphorylated glycolipid that anchors the lipopolysaccharide to the outer membrane of the cell. The polypeptide is UDP-3-O-acylglucosamine N-acyltransferase (Rickettsia bellii (strain RML369-C)).